Reading from the N-terminus, the 218-residue chain is Adenylate kinase (218 aa).

11 to 16 lines the ATP pocket; it reads GAGKGT. The NMP stretch occupies residues 31 to 60; sequence STGDMFREAMANKTKVGLEAKSYIDKGNLV. Residues T32, R37, 58-60, 86-89, and Q93 each bind AMP; these read NLV and GFPR. The interval 127-165 is LID; the sequence is ARYMCKNCGATYNKISKQPKVEGTCDRCGSHEFYQREDD. R128 contacts ATP. 2 residues coordinate Zn(2+): C131 and C134. An ATP-binding site is contributed by 137 to 138; that stretch reads TY. C151 and C154 together coordinate Zn(2+). AMP contacts are provided by R162 and R173. Q201 serves as a coordination point for ATP.

It belongs to the adenylate kinase family. Monomer.

It localises to the cytoplasm. The catalysed reaction is AMP + ATP = 2 ADP. The protein operates within purine metabolism; AMP biosynthesis via salvage pathway; AMP from ADP: step 1/1. Catalyzes the reversible transfer of the terminal phosphate group between ATP and AMP. Plays an important role in cellular energy homeostasis and in adenine nucleotide metabolism. The polypeptide is Adenylate kinase (Lactobacillus acidophilus (strain ATCC 700396 / NCK56 / N2 / NCFM)).